Consider the following 383-residue polypeptide: Meiotic recombination protein SPO11-2 (383 aa).

In terms of domain architecture, Topo IIA-type catalytic spans 24–167 (LLPHEARARI…LGIMASSRGL (144 aa)). Tyr-124 (O-(5'-phospho-DNA)-tyrosine intermediate) is an active-site residue. 2 residues coordinate Mg(2+): Glu-217 and Asp-270.

Belongs to the TOP6A family. As to quaternary structure, heterotetramer of 2 SPO11 (SPO11-1 and/or SPO11-2) and 2 MTOPVIB chains. Interacts with MTOPVIB. May form a heterodimer with SPO11-1. Interacts with PRD1. Does not interact with TOP6B. It depends on Mg(2+) as a cofactor. As to expression, very low expression in flowers and shoots.

The protein localises to the nucleus. It catalyses the reaction ATP-dependent breakage, passage and rejoining of double-stranded DNA.. Component of a topoisomerase 6 complex specifically required for meiotic recombination. Together with MTOPVIB, mediates DNA cleavage that forms the double-strand breaks (DSB) that initiate meiotic recombination. The complex promotes relaxation of negative and positive supercoiled DNA and DNA decatenation through cleavage and ligation cycles. The sequence is that of Meiotic recombination protein SPO11-2 (SPO11-2) from Arabidopsis thaliana (Mouse-ear cress).